Consider the following 245-residue polypeptide: DNA repair protein RecO (245 aa).

It belongs to the RecO family.

Its function is as follows. Involved in DNA repair and RecF pathway recombination. The polypeptide is DNA repair protein RecO (Bartonella bacilliformis (strain ATCC 35685 / KC583 / Herrer 020/F12,63)).